The chain runs to 193 residues: Ion-translocating oxidoreductase complex subunit A (193 aa).

6 consecutive transmembrane segments (helical) span residues 5 to 25, 39 to 59, 63 to 83, 102 to 122, 134 to 154, and 171 to 191; these read LLLFVGTVLVNNFVLVKFLGL, MGMGLATTFVMTLASICAWLI, ILIPLNLIYLRTLAFILVIAV, LLGIFLPLITTNCAVLGVALL, ALYGFSAAVGFSLVMVLFAAI, and AIALITAGLMSLAFMGFNGLV.

Belongs to the NqrDE/RnfAE family. As to quaternary structure, the complex is composed of six subunits: RsxA, RsxB, RsxC, RsxD, RsxE and RsxG.

It localises to the cell inner membrane. Its function is as follows. Part of a membrane-bound complex that couples electron transfer with translocation of ions across the membrane. Required to maintain the reduced state of SoxR. In Shigella sonnei (strain Ss046), this protein is Ion-translocating oxidoreductase complex subunit A.